Reading from the N-terminus, the 436-residue chain is Xylose isomerase (436 aa).

Catalysis depends on residues histidine 100 and aspartate 103. 7 residues coordinate Mg(2+): glutamate 231, glutamate 267, histidine 270, aspartate 295, aspartate 306, aspartate 308, and aspartate 338.

It belongs to the xylose isomerase family. As to quaternary structure, homotetramer. Requires Mg(2+) as cofactor.

It localises to the cytoplasm. It catalyses the reaction alpha-D-xylose = alpha-D-xylulofuranose. The polypeptide is Xylose isomerase (Chelativorans sp. (strain BNC1)).